The primary structure comprises 148 residues: MTITQVKIKKLENFSGSLPEYATEHSAGMDLIAANEQPITIKAAAIQLIPTGIAIALPDSFEAQIRPRSGLAVKHGITVANSPGTIDADYRGEIKVILINLGKEDFIIEKGMRIAQMIIAKYERILWEESISLMETMRGSGGFGSTGV.

Substrate is bound by residues 68 to 70 (RSG), N81, 85 to 87 (TID), and K95.

The protein belongs to the dUTPase family. Mg(2+) serves as cofactor.

The enzyme catalyses dUTP + H2O = dUMP + diphosphate + H(+). Its pathway is pyrimidine metabolism; dUMP biosynthesis; dUMP from dCTP (dUTP route): step 2/2. Functionally, this enzyme is involved in nucleotide metabolism: it produces dUMP, the immediate precursor of thymidine nucleotides and it decreases the intracellular concentration of dUTP so that uracil cannot be incorporated into DNA. The protein is Deoxyuridine 5'-triphosphate nucleotidohydrolase of Rickettsia rickettsii (strain Iowa).